The sequence spans 70 residues: Protein SlyX homolog (70 aa).

Belongs to the SlyX family.

The protein is Protein SlyX homolog of Shewanella woodyi (strain ATCC 51908 / MS32).